The following is a 541-amino-acid chain: Developmental and secondary metabolism regulator VEL1 (541 aa).

The Velvet domain maps to 26 to 220; sequence NRHLWYQLTV…ADQGCRVRIR (195 aa). A Nuclear localization signal motif is present at residues 40–45; sequence ERARAC. 2 disordered regions span residues 222–447 and 464–483; these read DVRM…MPTQ and PIEA…TGGK. Residues 230-244 show a composition bias toward basic and acidic residues; it reads GKGSGYDRREEEYAR. Low complexity predominate over residues 289-298; sequence APSLPHAPSL. Pro residues-rich tracts occupy residues 299 to 314, 345 to 355, and 425 to 439; these read PHAP…PPAA, APIPPVTPTGP, and SPAP…PAPS. Residues 444–472 form a PEST region; the sequence is MPTQSSLAPLKIASLVSPLPPIEAQTEPL.

It belongs to the velvet family. VeA subfamily. As to quaternary structure, component of the heterotrimeric velvet complex composed of LAE1, VEL1 and VEL2; VEL1 acting as a bridging protein between LAE1 and VEL2.

It is found in the nucleus. The protein localises to the cytoplasm. In terms of biological role, component of the velvet transcription factor complex that controls sexual/asexual developmental ratio in response to light, promoting sexual development in the darkness while stimulating asexual sporulation under illumination. The velvet complex acts as a global regulator for secondary metabolite gene expression. Controls the expression of the gliotoxin gene cluster. Plays a key role in mycoparasitism. The chain is Developmental and secondary metabolism regulator VEL1 from Hypocrea virens (strain Gv29-8 / FGSC 10586) (Gliocladium virens).